A 1372-amino-acid chain; its full sequence is DNA-directed RNA polymerase subunit beta' (1372 aa).

Zn(2+) contacts are provided by C69, C71, C84, and C87. Mg(2+) contacts are provided by D460, D462, and D464. 4 residues coordinate Zn(2+): C808, C882, C889, and C892.

The protein belongs to the RNA polymerase beta' chain family. In terms of assembly, the RNAP catalytic core consists of 2 alpha, 1 beta, 1 beta' and 1 omega subunit. When a sigma factor is associated with the core the holoenzyme is formed, which can initiate transcription. Mg(2+) is required as a cofactor. Zn(2+) serves as cofactor.

The catalysed reaction is RNA(n) + a ribonucleoside 5'-triphosphate = RNA(n+1) + diphosphate. Its function is as follows. DNA-dependent RNA polymerase catalyzes the transcription of DNA into RNA using the four ribonucleoside triphosphates as substrates. This chain is DNA-directed RNA polymerase subunit beta', found in Rickettsia felis (strain ATCC VR-1525 / URRWXCal2) (Rickettsia azadi).